The sequence spans 314 residues: 3'-5' exoribonuclease YhaM (314 aa).

The 117-residue stretch at 163-279 folds into the HD domain; the sequence is HVVSMLDLAK…LHYIDNLDAK (117 aa).

It belongs to the YhaM family.

Shows a 3'-5' exoribonuclease activity. The chain is 3'-5' exoribonuclease YhaM from Bacillus cereus (strain G9842).